Reading from the N-terminus, the 178-residue chain is Inorganic pyrophosphatase (178 aa).

Substrate-binding residues include Lys30, Arg44, and Tyr56. Mg(2+)-binding residues include Asp66, Asp71, and Asp103. Tyr140 is a substrate binding site.

This sequence belongs to the PPase family. In terms of assembly, homohexamer. Mg(2+) serves as cofactor.

The protein localises to the cytoplasm. It catalyses the reaction diphosphate + H2O = 2 phosphate + H(+). Functionally, catalyzes the hydrolysis of inorganic pyrophosphate (PPi) forming two phosphate ions. This chain is Inorganic pyrophosphatase, found in Pyrococcus abyssi (strain GE5 / Orsay).